Consider the following 421-residue polypeptide: 3-isopropylmalate dehydratase large subunit (421 aa).

[4Fe-4S] cluster-binding residues include Cys300, Cys360, and Cys363.

This sequence belongs to the aconitase/IPM isomerase family. LeuC type 2 subfamily. Heterodimer of LeuC and LeuD. The cofactor is [4Fe-4S] cluster.

It catalyses the reaction (2R,3S)-3-isopropylmalate = (2S)-2-isopropylmalate. It functions in the pathway amino-acid biosynthesis; L-leucine biosynthesis; L-leucine from 3-methyl-2-oxobutanoate: step 2/4. Functionally, catalyzes the isomerization between 2-isopropylmalate and 3-isopropylmalate, via the formation of 2-isopropylmaleate. This Thermodesulfovibrio yellowstonii (strain ATCC 51303 / DSM 11347 / YP87) protein is 3-isopropylmalate dehydratase large subunit.